The following is a 365-amino-acid chain: tRNA-specific 2-thiouridylase MnmA (365 aa).

Residues 14–21 (AMSGGVDS) and Leu40 contribute to the ATP site. The Nucleophile role is filled by Cys108. Cys108 and Cys204 are joined by a disulfide. Gly132 contacts ATP. The interaction with tRNA stretch occupies residues 154–156 (KDQ). Residue Cys204 is the Cysteine persulfide intermediate of the active site.

The protein belongs to the MnmA/TRMU family.

The protein resides in the cytoplasm. The catalysed reaction is S-sulfanyl-L-cysteinyl-[protein] + uridine(34) in tRNA + AH2 + ATP = 2-thiouridine(34) in tRNA + L-cysteinyl-[protein] + A + AMP + diphosphate + H(+). Functionally, catalyzes the 2-thiolation of uridine at the wobble position (U34) of tRNA, leading to the formation of s(2)U34. This is tRNA-specific 2-thiouridylase MnmA from Rickettsia felis (strain ATCC VR-1525 / URRWXCal2) (Rickettsia azadi).